Consider the following 387-residue polypeptide: Exodeoxyribonuclease 7 large subunit (387 aa).

Belongs to the XseA family. As to quaternary structure, heterooligomer composed of large and small subunits.

Its subcellular location is the cytoplasm. It carries out the reaction Exonucleolytic cleavage in either 5'- to 3'- or 3'- to 5'-direction to yield nucleoside 5'-phosphates.. In terms of biological role, bidirectionally degrades single-stranded DNA into large acid-insoluble oligonucleotides, which are then degraded further into small acid-soluble oligonucleotides. This is Exodeoxyribonuclease 7 large subunit from Campylobacter jejuni subsp. jejuni serotype O:2 (strain ATCC 700819 / NCTC 11168).